The chain runs to 346 residues: Sensor protein kinase GraS (346 aa).

The next 2 membrane-spanning stretches (helical) occupy residues 15-35 (MNWI…SLID) and 43-63 (LFYI…LTYF). In terms of domain architecture, Histidine kinase spans 126–332 (EFVHDIKTPV…TVRLIFPLQN (207 aa)).

In terms of assembly, interacts with GraX.

It localises to the cell membrane. The catalysed reaction is ATP + protein L-histidine = ADP + protein N-phospho-L-histidine.. Functionally, member of the two-component regulatory system GraR/GraS involved in resistance against cationic antimicrobial peptides (CAMPs). Functions as a sensor protein kinase which phosphorylates GraR through the auxiliary protein GraX. In turn, GraR up-regulates many genes such as adhesins, exoproteins, transporters, toxins, and proteins involved in cell wall synthesis. Down-regulates the expression of many genes involved in RNA and amino acid synthesis or glycolysis. The polypeptide is Sensor protein kinase GraS (graS) (Staphylococcus aureus (strain bovine RF122 / ET3-1)).